Consider the following 290-residue polypeptide: MVIQKEKKSCGQVVEEWKEFVWNPRTHQFMGRTGTSWAFILLFYLVFYGFLTAMFTLTMWVMLQTVSDHTPKYQDRLATPGLMIRPKTENLDVIVNISDTESWDQHVQKLNKFLEPYNDSIQAQKNDVCRPGRYYEQPDNGVLNYPKRACQFNRTQLGNCSGIGDPTHYGYSTGQPCVFIKMNRVINFYAGANQSMNVTCVGKKDEDAENLGHFIMFPANGNIDLMYFPYYGKKFHVNYTQPLVAVKFLNVTPNVEVNVECRINAANIATDDERDKFAARVAFKLRINKA.

The Cytoplasmic segment spans residues 1–39 (MVIQKEKKSCGQVVEEWKEFVWNPRTHQFMGRTGTSWAF). Residues 40–67 (ILLFYLVFYGFLTAMFTLTMWVMLQTVS) form a helical; Signal-anchor for type II membrane protein membrane-spanning segment. Topologically, residues 68–290 (DHTPKYQDRL…VAFKLRINKA (223 aa)) are extracellular. N-linked (GlcNAc...) asparagine glycosylation is found at Asn-96 and Asn-118. An intrachain disulfide couples Cys-129 to Cys-150. Asn-153 and Asn-159 each carry an N-linked (GlcNAc...) asparagine glycan. Cys-160 and Cys-177 are disulfide-bonded. Residues Asn-193, Asn-197, and Asn-238 are each glycosylated (N-linked (GlcNAc...) asparagine). The interval 193 to 290 (NQSMNVTCVG…VAFKLRINKA (98 aa)) is immunoglobulin-like. An intrachain disulfide couples Cys-200 to Cys-261.

This sequence belongs to the X(+)/potassium ATPases subunit beta family. The sodium/potassium-transporting ATPase is composed of a catalytic alpha subunit, an auxiliary non-catalytic beta subunit and an additional regulatory subunit. Interacts with isoform 2 of BSG. In terms of tissue distribution, highly expressed in brain (at protein level).

The protein localises to the cell membrane. Functionally, this is the non-catalytic component of the active enzyme, which catalyzes the hydrolysis of ATP coupled with the exchange of Na(+) and K(+) ions across the plasma membrane. The exact function of the beta-2 subunit is not known. Mediates cell adhesion of neurons and astrocytes, and promotes neurite outgrowth. The chain is Sodium/potassium-transporting ATPase subunit beta-2 (Atp1b2) from Rattus norvegicus (Rat).